Reading from the N-terminus, the 228-residue chain is ATP-dependent dethiobiotin synthetase BioD (228 aa).

Residue 13 to 18 (DIGKTF) coordinates ATP. Residue threonine 17 participates in Mg(2+) binding. Lysine 38 is a catalytic residue. Serine 42 contributes to the substrate binding site. Residues aspartate 55, 116–119 (EGSG), 179–180 (NK), and 208–210 (PKI) each bind ATP. Mg(2+)-binding residues include aspartate 55 and glutamate 116.

Belongs to the dethiobiotin synthetase family. In terms of assembly, homodimer. Requires Mg(2+) as cofactor.

Its subcellular location is the cytoplasm. It carries out the reaction (7R,8S)-7,8-diammoniononanoate + CO2 + ATP = (4R,5S)-dethiobiotin + ADP + phosphate + 3 H(+). Its pathway is cofactor biosynthesis; biotin biosynthesis; biotin from 7,8-diaminononanoate: step 1/2. In terms of biological role, catalyzes a mechanistically unusual reaction, the ATP-dependent insertion of CO2 between the N7 and N8 nitrogen atoms of 7,8-diaminopelargonic acid (DAPA, also called 7,8-diammoniononanoate) to form a ureido ring. The chain is ATP-dependent dethiobiotin synthetase BioD from Clostridium perfringens (strain 13 / Type A).